We begin with the raw amino-acid sequence, 294 residues long: Cytidine deaminase (294 aa).

2 CMP/dCMP-type deaminase domains span residues 48-168 and 187-294; these read DDDA…FGPT and AETD…RVTF. 89–91 lines the substrate pocket; it reads NME. His-102 serves as a coordination point for Zn(2+). Glu-104 acts as the Proton donor in catalysis. Residues Cys-129 and Cys-132 each coordinate Zn(2+).

It belongs to the cytidine and deoxycytidylate deaminase family. Homodimer. Requires Zn(2+) as cofactor.

It catalyses the reaction cytidine + H2O + H(+) = uridine + NH4(+). It carries out the reaction 2'-deoxycytidine + H2O + H(+) = 2'-deoxyuridine + NH4(+). In terms of biological role, this enzyme scavenges exogenous and endogenous cytidine and 2'-deoxycytidine for UMP synthesis. The polypeptide is Cytidine deaminase (Yersinia pseudotuberculosis serotype IB (strain PB1/+)).